Here is a 142-residue protein sequence, read N- to C-terminus: Large ribosomal subunit protein uL13 (142 aa).

Belongs to the universal ribosomal protein uL13 family. Part of the 50S ribosomal subunit.

Functionally, this protein is one of the early assembly proteins of the 50S ribosomal subunit, although it is not seen to bind rRNA by itself. It is important during the early stages of 50S assembly. This is Large ribosomal subunit protein uL13 from Shewanella denitrificans (strain OS217 / ATCC BAA-1090 / DSM 15013).